The following is a 200-amino-acid chain: Recombination protein RecR (200 aa).

The segment at 57–72 (CRQCRTLTEEELCPQC) adopts a C4-type zinc-finger fold. One can recognise a Toprim domain in the interval 80–175 (TLLCVVEGPM…ITSRIAHGVP (96 aa)).

Belongs to the RecR family.

Functionally, may play a role in DNA repair. It seems to be involved in an RecBC-independent recombinational process of DNA repair. It may act with RecF and RecO. The protein is Recombination protein RecR of Pseudomonas fluorescens (strain SBW25).